Reading from the N-terminus, the 140-residue chain is Putative transcription elongation factor S-II-like protein 349L (140 aa).

A TFIIS-type zinc finger spans residues 100–139 (GAIKCKCGSERVFSFSKQTRSGDESTSVFALCSSCKSKWV). Zn(2+) is bound by residues C104, C106, C131, and C134.

The protein belongs to the IIV-6 349L family.

The polypeptide is Putative transcription elongation factor S-II-like protein 349L (Acheta domesticus (House cricket)).